A 281-amino-acid chain; its full sequence is Non-selective voltage-gated ion channel 2 (281 aa).

Residues R11 and R19 each contribute to the ATP site.

This sequence belongs to the eukaryotic mitochondrial porin family.

The protein localises to the mitochondrion outer membrane. Non-selective voltage-gated ion channel that mediates the transport of anions and cations through the mitochondrion outer membrane. The channel adopts an open conformation at low or zero membrane potential and a closed conformation at potentials above 30-40 mV. The open state has a weak anion selectivity whereas the closed state is cation-selective. Does not confer permeability to NADH. In terms of biological role, catalyzes the scrambling of phospholipids across the outer mitochondrial membrane; the mechanism is unrelated to channel activity and is capable of translocating both anionic and zwitterionic phospholipids. The sequence is that of Non-selective voltage-gated ion channel 2 (POR2) from Saccharomyces cerevisiae (strain ATCC 204508 / S288c) (Baker's yeast).